Reading from the N-terminus, the 907-residue chain is Leucine-rich repeat-containing G-protein coupled receptor 5 (907 aa).

The signal sequence occupies residues 1 to 21; the sequence is MDTSRVRMLLSLLALLQLVAA. Topologically, residues 22–561 are extracellular; it reads GSPPRPDTMP…EHLFGSWLIR (540 aa). Positions 33 to 64 constitute an LRRNT domain; it reads GCPSYCHCELDGRMLLRVDCSDLGLSELPSNL. Cystine bridges form between C34-C40 and C38-C52. LRR repeat units lie at residues 44–64, 65–88, 89–112, 114–136, 137–160, 162–184, 186–208, 209–232, 233–256, 257–279, 281–303, 304–327, 328–350, 351–375, 377–396, 397–420, and 422–444; these read GRML…PSNL, SVFT…LLHR, LRFL…AFAG, HSLK…ALQN, LRSL…CFSG, HSLR…AFRS, SALQ…AFGN, LSSL…CFDG, LHSL…IKTL, SNLK…AFVG, PSLI…AFQH, LPEL…LTGT, ATLE…VCDQ, LPNL…GCQK, QKID…TFQQ, LFNL…AFST, and PSLI…GLHG. N-linked (GlcNAc...) asparagine glycosylation is found at N63 and N77. N-linked (GlcNAc...) asparagine glycosylation occurs at N208. A disulfide bridge links C348 with C373. C479 and C541 are joined by a disulfide. The chain crosses the membrane as a helical span at residues 562–582; the sequence is IGVWTTAVLALSCNALVAFTV. The LRR 18 repeat unit spans residues 564–585; sequence VWTTAVLALSCNALVAFTVFRT. Residues 583-595 are Cytoplasmic-facing; it reads FRTPLYISSIKLL. Residues 596–616 form a helical membrane-spanning segment; sequence IGVIAVVDILMGVSSAILAVV. The Extracellular portion of the chain corresponds to 617–638; the sequence is DTFTFGSFAQHGAWWEGGIGCQ. C637 and C712 are joined by a disulfide. A helical membrane pass occupies residues 639–659; sequence IVGFLSIFASESSVFLLTLAA. Topologically, residues 660–682 are cytoplasmic; the sequence is LERGFSVKCSSKFEMKAPLSSLK. A helical transmembrane segment spans residues 683–703; that stretch reads AIILLCVLLALTIATVPLLGG. Residues 704–723 are Extracellular-facing; sequence SEYNASPLCLPLPFGEPSTT. Residues 724–744 form a helical membrane-spanning segment; that stretch reads GYMVALVLLNSLCFLIMTIAY. Residues 745–775 lie on the Cytoplasmic side of the membrane; that stretch reads TRLYCSLEKGELENLWDCSMVKHTALLLFTN. The chain crosses the membrane as a helical span at residues 776–796; sequence CILYCPVAFLSFSSLLNLTFI. Over 797-802 the chain is Extracellular; sequence SPEVIK. A helical transmembrane segment spans residues 803-823; the sequence is FILLVIVPLPACLNPLLYIVF. Residues 824 to 907 are Cytoplasmic-facing; it reads NPHFKEDMGS…LSSVAFVPCL (84 aa).

Belongs to the G-protein coupled receptor 1 family. Identified in a complex composed of RNF43, LGR5 and RSPO1. Also interacts with other R-spondin ligands, including RSPO2, RSPO3 and RSPO4.

The protein localises to the cell membrane. It is found in the golgi apparatus. Its subcellular location is the trans-Golgi network membrane. Receptor for R-spondins that potentiates the canonical Wnt signaling pathway and acts as a stem cell marker of the intestinal epithelium and the hair follicle. Upon binding to R-spondins (RSPO1, RSPO2, RSPO3 or RSPO4), associates with phosphorylated LRP6 and frizzled receptors that are activated by extracellular Wnt receptors, triggering the canonical Wnt signaling pathway to increase expression of target genes. In contrast to classical G-protein coupled receptors, does not activate heterotrimeric G-proteins to transduce the signal. Involved in the development and/or maintenance of the adult intestinal stem cells during postembryonic development. The polypeptide is Leucine-rich repeat-containing G-protein coupled receptor 5 (Lgr5) (Rattus norvegicus (Rat)).